We begin with the raw amino-acid sequence, 415 residues long: Squalene synthase 12 (415 aa).

2 helical membrane passes run 281 to 301 (AIFR…ALCF) and 391 to 411 (LIAI…SNLL).

This sequence belongs to the phytoene/squalene synthase family. Mg(2+) serves as cofactor. It depends on Mn(2+) as a cofactor.

It localises to the endoplasmic reticulum membrane. It carries out the reaction 2 (2E,6E)-farnesyl diphosphate + NADH + H(+) = squalene + 2 diphosphate + NAD(+). The enzyme catalyses 2 (2E,6E)-farnesyl diphosphate + NADPH + H(+) = squalene + 2 diphosphate + NADP(+). Its pathway is terpene metabolism; lanosterol biosynthesis; lanosterol from farnesyl diphosphate: step 1/3. Component of the triterpene saponins (e.g. ginsenosides or panaxosides) and phytosterols biosynthetic pathways. Catalyzes the biosynthesis of squalene. In Panax ginseng (Korean ginseng), this protein is Squalene synthase 12.